A 226-amino-acid chain; its full sequence is Agamous-like MADS-box protein AP3 (226 aa).

Residues 1–61 enclose the MADS-box domain; sequence MARGKIEIKR…GKLHEYISPS (61 aa). One can recognise a K-box domain in the interval 84–174; it reads YERMQENLKK…LHEFDARDRD (91 aa).

In terms of tissue distribution, expressed during flower development in stamens and petals.

It localises to the nucleus. In terms of biological role, probable transcription factor involved in flower development. This chain is Agamous-like MADS-box protein AP3, found in Vitis vinifera (Grape).